The sequence spans 262 residues: MDPRLSAVRQTCCCFNVRIATTALAIYHVIMSVLLFIEHSVEVAHGKASCKLSQMGYLRIADLISSFLLIAMLFIISLSLLIGVVKNREKYLLPFLSLQVMDYLLCLLTLLGSYIELPAYLKLASRSRASPSKFPLMTLQLLDFCLSILTLCSSYMEVPTYLNFKSMNHMNYLPSQEDMPHNQFIKMMIIFSIAFITVLIFKVYMFKCVWRCYRFIKCMNSVEEKRNSKMLQKVVLPSYEEALSLPSKTPEGGPAPPPYSEV.

5 consecutive transmembrane segments (helical) span residues 19 to 39 (IATT…FIEH), 64 to 84 (ISSF…LIGV), 92 to 112 (LLPF…TLLG), 134 to 154 (FPLM…LCSS), and 184 to 204 (FIKM…FKVY). A Phosphotyrosine modification is found at Y259.

This sequence belongs to the LAPTM4/LAPTM5 transporter family. As to quaternary structure, binds to ubiquitin.

It is found in the lysosome membrane. Functionally, may have a special functional role during embryogenesis and in adult hematopoietic cells. This is Lysosomal-associated transmembrane protein 5 (LAPTM5) from Pongo abelii (Sumatran orangutan).